The chain runs to 105 residues: MALPQLTDEQRAAALEKAAAARRARAELKDRLKRGGTNLTQVLKDAESDEVLGKMKVSALLEALPKVGKVKAQEIMTELEIAPTRRLRGLGDRQRKALLEKFGSA.

Residues 64–71 (LPKVGKVK) carry the H2TH motif, binds DNA motif. Residues 82-94 (APTRRLRGLGDRQ) form a lid, binds DNA region.

It belongs to the actinobacterial IHF (aIHF) family. As to quaternary structure, homodimer in solution. Binds DNA as a monomer.

It is found in the cytoplasm. Its function is as follows. A nucleoid-associated protein (NAP) required for septum formation and normal cell division as well as for DNA segregation. Binds about 135 sites across the chromosome, most of which are genes involved in virulence; most DNA-binding sites are immediately upstream of transcription start sites. When mIHF is depleted most of the genes are down-regulated. Binds supercoiled and linear dsDNA in a concentration-dependent manner, probably non-sequence specifically. Binding compacts DNA, protecting it from degradation. Initial binding to supercoiled DNA opens it fully, followed by bending and compaction. Bends and thus compacts linear DNA. Binds DNA via 2 sites, forms left-handed loops on linear DNA; at low concentrations unwinds larger cosmids (42.6 kb) then collapses and condenses DNA as protein levels rise. Forms mostly left-handed loops on condensing cosmid DNA. The chain is Integration host factor from Mycobacterium tuberculosis (strain ATCC 25618 / H37Rv).